A 606-amino-acid polypeptide reads, in one-letter code: Diphthine--ammonia ligase (606 aa).

In the N-terminal section; belongs to the Diphthine--ammonia ligase family. This sequence in the C-terminal section; belongs to the RutC family.

Its subcellular location is the cytoplasm. The protein resides in the nucleus. It carries out the reaction diphthine-[translation elongation factor 2] + NH4(+) + ATP = diphthamide-[translation elongation factor 2] + AMP + diphosphate + H(+). Its pathway is protein modification; peptidyl-diphthamide biosynthesis. Functionally, amidase that catalyzes the last step of diphthamide biosynthesis using ammonium and ATP. Diphthamide biosynthesis consists in the conversion of an L-histidine residue in the translation elongation factor eEF-2 (eft201 or eft202) to diphthamide. Has a role in meiosis. This is Diphthine--ammonia ligase (mug71) from Schizosaccharomyces pombe (strain 972 / ATCC 24843) (Fission yeast).